The primary structure comprises 445 residues: 4-hydroxyphenylpyruvate dioxygenase (445 aa).

Residues Met1–Asn11 show a composition bias toward polar residues. Residues Met1–Ser20 form a disordered region. 2 consecutive VOC domains span residues Arg46 to Tyr192 and Arg223 to Lys383. Fe cation-binding residues include His226, His308, and Glu394.

This sequence belongs to the 4HPPD family. Homodimer. It depends on Fe cation as a cofactor.

The protein localises to the cytoplasm. The catalysed reaction is 3-(4-hydroxyphenyl)pyruvate + O2 = homogentisate + CO2. Its pathway is amino-acid degradation; L-phenylalanine degradation; acetoacetate and fumarate from L-phenylalanine: step 3/6. It functions in the pathway cofactor biosynthesis; prenylquinone biosynthesis. Catalyzes the conversion of 4-hydroxyphenylpyruvic acid to homogentisic acid, one of the steps in tyrosine catabolism. This is 4-hydroxyphenylpyruvate dioxygenase (HPD) from Arabidopsis thaliana (Mouse-ear cress).